Reading from the N-terminus, the 328-residue chain is Phosphatidylglycerol--prolipoprotein diacylglyceryl transferase (328 aa).

3 helical membrane-spanning segments follow: residues 15-35, 57-77, and 106-126; these read VIQG…ILIS, IFMF…STLV, and GMAI…TINT. Arginine 156 lines the a 1,2-diacyl-sn-glycero-3-phospho-(1'-sn-glycerol) pocket. 2 helical membrane-spanning segments follow: residues 242-262 and 289-309; these read GFIF…IEYL and ISMG…WIIV.

Belongs to the Lgt family.

The protein resides in the cell inner membrane. It carries out the reaction L-cysteinyl-[prolipoprotein] + a 1,2-diacyl-sn-glycero-3-phospho-(1'-sn-glycerol) = an S-1,2-diacyl-sn-glyceryl-L-cysteinyl-[prolipoprotein] + sn-glycerol 1-phosphate + H(+). It participates in protein modification; lipoprotein biosynthesis (diacylglyceryl transfer). Functionally, catalyzes the transfer of the diacylglyceryl group from phosphatidylglycerol to the sulfhydryl group of the N-terminal cysteine of a prolipoprotein, the first step in the formation of mature lipoproteins. In Borreliella burgdorferi (strain ATCC 35210 / DSM 4680 / CIP 102532 / B31) (Borrelia burgdorferi), this protein is Phosphatidylglycerol--prolipoprotein diacylglyceryl transferase.